Reading from the N-terminus, the 472-residue chain is MDTKQIWFTTLGTLQNQILRYDYDTWLKTTALVSVANDLAVIGAPNVTTKQVIEDRFMSVLRRALGEVLGYQVNVRVIISSATPAPSEPVAVTPSEPSPTTEVAEPSFASFNQAAPMLNQLPLGDPNRSSVLNPRYTFSSFIVGTSNRLAHAACMAVAEHPAQAYNPLFLYGGVGLGKTHLLQAIGNYALDRNPEVNVLYVSSEKFTNDLINAIRRQQTEEFRIRYRNIDILLIDDIQFIAGKEGTQEEFFHTFNTLHGAGKQIVLSSDRPPKAILTLEERLRSRFEWGLIVDVQNPDLETRTAILRAKGETLQVPVSSEVIDFLAQRIQSNIRELEGCLNRVIAYANLNRTPVTVEVASAALADLLDTSRRKRVTADDIFREVSQHYGIDQRAIRGRGRSRNVVLPRQVVMYLLREETDASLVEIGELLGGRDHTTVMHGYNKITDDLTSDARLRNDITSLRQRLYGENAR.

Positions 1–80 (MDTKQIWFTT…YQVNVRVIIS (80 aa)) are domain I, interacts with DnaA modulators. The tract at residues 80-130 (SSATPAPSEPVAVTPSEPSPTTEVAEPSFASFNQAAPMLNQLPLGDPNRSS) is domain II. A domain III, AAA+ region region spans residues 131–347 (VLNPRYTFSS…GCLNRVIAYA (217 aa)). 4 residues coordinate ATP: Gly175, Gly177, Lys178, and Thr179. Positions 348–472 (NLNRTPVTVE…RQRLYGENAR (125 aa)) are domain IV, binds dsDNA.

Belongs to the DnaA family. In terms of assembly, oligomerizes as a right-handed, spiral filament on DNA at oriC.

The protein localises to the cytoplasm. Its function is as follows. Plays an essential role in the initiation and regulation of chromosomal replication. ATP-DnaA binds to the origin of replication (oriC) to initiate formation of the DNA replication initiation complex once per cell cycle. Binds the DnaA box (a 9 base pair repeat at the origin) and separates the double-stranded (ds)DNA. Forms a right-handed helical filament on oriC DNA; dsDNA binds to the exterior of the filament while single-stranded (ss)DNA is stabiized in the filament's interior. The ATP-DnaA-oriC complex binds and stabilizes one strand of the AT-rich DNA unwinding element (DUE), permitting loading of DNA polymerase. After initiation quickly degrades to an ADP-DnaA complex that is not apt for DNA replication. Binds acidic phospholipids. In Herpetosiphon aurantiacus (strain ATCC 23779 / DSM 785 / 114-95), this protein is Chromosomal replication initiator protein DnaA.